Reading from the N-terminus, the 259-residue chain is 5'-nucleotidase SurE 1 (259 aa).

The a divalent metal cation site is built by Asp16, Asp17, Ser48, and Asn101.

Belongs to the SurE nucleotidase family. It depends on a divalent metal cation as a cofactor.

It localises to the cytoplasm. The catalysed reaction is a ribonucleoside 5'-phosphate + H2O = a ribonucleoside + phosphate. Functionally, nucleotidase that shows phosphatase activity on nucleoside 5'-monophosphates. The sequence is that of 5'-nucleotidase SurE 1 from Burkholderia lata (strain ATCC 17760 / DSM 23089 / LMG 22485 / NCIMB 9086 / R18194 / 383).